Consider the following 409-residue polypeptide: Potassium channel subfamily K member 3 (409 aa).

The Cytoplasmic segment spans residues 1–8; sequence MKRQNVRT. The helical transmembrane segment at 9–29 threads the bilayer; that stretch reads LALIVCTFTYLLVGAAVFDAL. N53 is a glycosylation site (N-linked (GlcNAc...) asparagine). Residues 78-101 constitute an intramembrane region (pore-forming); it reads WRFAGSFYFAITVITTIGYGHAAP. A helical transmembrane segment spans residues 108–128; sequence VFCMFYALLGIPLTLVMFQSL. Residues 129 to 158 are Cytoplasmic-facing; sequence GERINTFVRYLLHRAKRGLGMRHAEVSMAN. Residues 159 to 179 traverse the membrane as a helical segment; the sequence is MVLIGFVSCISTLCIGAAAFS. An intramembrane region (pore-forming) is located at residues 184-207; it reads WTFFQAYYYCFITLTTIGFGDYVA. The chain crosses the membrane as a helical span at residues 223–243; it reads FSFVYILTGLTVIGAFLNLVV. The Cytoplasmic portion of the chain corresponds to 244–409; the sequence is LRFMTMNAED…RGLMKRRSSV (166 aa).

Belongs to the two pore domain potassium channel (TC 1.A.1.8) family. As to quaternary structure, homodimer. Heterodimer with KCNK1. Heterodimer with KCNK9. As to expression, very strong expression in heart, also detected in kidney, brain, skin, testis, lung, skeletal muscle, small intestine and stomach. Not detected in liver, thymus or spleen. Expressed in adrenal glands mainly in zona glomerulosa and zona fasciculata of the cortex. Expressed at higher levels in brown and beige than in white adipocytes.

The protein resides in the cell membrane. The catalysed reaction is K(+)(in) = K(+)(out). It carries out the reaction Na(+)(in) = Na(+)(out). With respect to regulation, activated by halothane and isoflurane. Inhibited by external acidification, diacylglycerol and anandamide. Inactivated by barium. In terms of biological role, k(+) channel that conducts voltage-dependent outward rectifying currents upon membrane depolarization. Voltage sensing is coupled to K(+) electrochemical gradient in an 'ion flux gating' mode where outward but not inward ion flow opens the gate. Changes ion selectivity and becomes permeable to Na(+) ions in response to extracellular acidification. Protonation of the pH sensor His-98 stabilizes C-type inactivation conformation likely converting the channel from outward K(+)-conducting, to inward Na(+)-conducting to nonconductive state. Homo- and heterodimerizes to form functional channels with distinct regulatory and gating properties. Allows K(+) currents with fast-gating kinetics important for the repolarization and hyperpolarization phases of action potentials. In cerebellar granule cells, heteromeric KCNK3:KCNK9 channel may hyperpolarize the resting membrane potential to limit intrinsic neuronal excitability, but once the action potential threshold is reached, it may support high-frequency action potential firing and increased neuronal excitability. Dispensable for central chemosensory respiration i.e. breathing controlled by brainstem CO2/pH, it rather conducts pH-sensitive currents and controls the firing rate of serotonergic raphe neurons involved in potentiation of the respiratory chemoreflex. Additionally, imparts chemosensitivity to type 1 cells in carotid bodies which respond to a decrease in arterial oxygen pressure or an increase in carbon dioxide pressure or pH to initiate adaptive changes in pulmonary ventilation. In adrenal gland, contributes to the maintenance of a hyperpolarized resting membrane potential of aldosterone-producing cells at zona glomerulosa and limits aldosterone release as part of a regulatory mechanism that controls arterial blood pressure and electrolyte homeostasis. In brown adipocytes, mediates K(+) efflux that counteracts norepinephrine-induced membrane depolarization, limits Ca(2+) efflux and downstream cAMP and PKA signaling, ultimately attenuating lipid oxidation and adaptive thermogenesis. This is Potassium channel subfamily K member 3 from Mus musculus (Mouse).